The chain runs to 512 residues: Anaerobic nitric oxide reductase transcription regulator NorR (512 aa).

Residues 190–419 (MIGESLAMQE…LEHVISRAAV (230 aa)) form the Sigma-54 factor interaction domain. ATP is bound by residues 218–225 (GETGVGKE) and 281–290 (ADNGTLFLDE). The segment at residues 487-506 (WAATARALQLDTGNLHRLAK) is a DNA-binding region (H-T-H motif).

It participates in nitrogen metabolism; nitric oxide reduction. Its function is as follows. Required for the expression of anaerobic nitric oxide (NO) reductase, acts as a transcriptional activator for at least the norVW operon. Activation also requires sigma-54. This is Anaerobic nitric oxide reductase transcription regulator NorR from Aliivibrio fischeri (strain ATCC 700601 / ES114) (Vibrio fischeri).